The chain runs to 137 residues: Large ribosomal subunit protein uL16 (137 aa).

It belongs to the universal ribosomal protein uL16 family. In terms of assembly, part of the 50S ribosomal subunit.

In terms of biological role, binds 23S rRNA and is also seen to make contacts with the A and possibly P site tRNAs. The protein is Large ribosomal subunit protein uL16 of Streptococcus pyogenes serotype M1.